A 300-amino-acid chain; its full sequence is C-4 methylsterol oxidase erg25 (300 aa).

One can recognise a Fatty acid hydroxylase domain in the interval 140–276 (TLFFFLEDTW…FRWWDAVLKT (137 aa)). The Histidine box-1 motif lies at 154 to 158 (HRLFH). The short motif at 167–171 (HKVHH) is the Histidine box-2 element. A helical membrane pass occupies residues 186 to 206 (PLEIILLGAGTVFVPLMWCYF). The Histidine box-3 motif lies at 251–257 (HHDYHHM).

It belongs to the sterol desaturase family. As to quaternary structure, heterotetramer of erg25, erg26, erg27 and erg28. Erg28 acts as a scaffold to tether erg27 and other 4,4-demethylation-related enzymes, forming a demethylation enzyme complex, in the endoplasmic reticulum. Requires Fe cation as cofactor.

It localises to the endoplasmic reticulum membrane. The catalysed reaction is 4,4-dimethyl-5alpha-cholesta-8,24-dien-3beta-ol + 6 Fe(II)-[cytochrome b5] + 3 O2 + 5 H(+) = 4beta-methylzymosterol-4alpha-carboxylate + 6 Fe(III)-[cytochrome b5] + 4 H2O. The enzyme catalyses 4alpha-methylzymosterol + 6 Fe(II)-[cytochrome b5] + 3 O2 + 5 H(+) = 4alpha-carboxyzymosterol + 6 Fe(III)-[cytochrome b5] + 4 H2O. The protein operates within steroid biosynthesis; zymosterol biosynthesis; zymosterol from lanosterol: step 3/6. It participates in steroid metabolism; ergosterol biosynthesis. C-4 methylsterol oxidase; part of the third module of ergosterol biosynthesis pathway that includes by the late steps of the pathway. Erg25 is a catalytic component of the C-4 demethylation complex that catalyzes the three-step monooxygenation required for the demethylation of 4,4-dimethyl and 4alpha-methylsterols. The third module or late pathway involves the ergosterol synthesis itself through consecutive reactions that mainly occur in the endoplasmic reticulum (ER) membrane. Firstly, the squalene synthase erg9 catalyzes the condensation of 2 farnesyl pyrophosphate moieties to form squalene, which is the precursor of all steroids. Secondly, squalene is converted into lanosterol by the consecutive action of the squalene epoxidase erg1 and the lanosterol synthase erg7. The lanosterol 14-alpha-demethylase erg11/cyp1 catalyzes C14-demethylation of lanosterol to produce 4,4'-dimethyl cholesta-8,14,24-triene-3-beta-ol. In the next steps, a complex process involving various demethylation, reduction and desaturation reactions catalyzed by the C-14 reductase erg24 and the C-4 demethylation complex erg25-erg26-erg27 leads to the production of zymosterol. Erg28 likely functions in the C-4 demethylation complex reaction by tethering erg26 and Erg27 to the endoplasmic reticulum or to facilitate interaction between these proteins. Then, the sterol 24-C-methyltransferase erg6 catalyzes the methyl transfer from S-adenosyl-methionine to the C-24 of zymosterol to form fecosterol. The C-8 sterol isomerase erg2 catalyzes the reaction which results in unsaturation at C-7 in the B ring of sterols and thus converts fecosterol to episterol. The sterol-C5-desaturases erg31 and erg32 then catalyze the introduction of a C-5 double bond in the B ring to produce 5-dehydroepisterol. The C-22 sterol desaturase erg5 further converts 5-dehydroepisterol into ergosta-5,7,22,24(28)-tetraen-3beta-ol by forming the C-22(23) double bond in the sterol side chain. Finally, ergosta-5,7,22,24(28)-tetraen-3beta-ol is substrate of the C-24(28) sterol reductase erg4 to produce ergosterol. In the genus Schizosaccharomyces, a second route exists between lanosterol and fecosterol, via the methylation of lanosterol to eburicol by erg6, followed by C14-demethylation by erg11/cyp1 and C4-demethylation by the demethylation complex erg25-erg26-erg27. The polypeptide is C-4 methylsterol oxidase erg25 (Schizosaccharomyces pombe (strain 972 / ATCC 24843) (Fission yeast)).